The primary structure comprises 389 residues: Na(+)/H(+) antiporter NhaA (389 aa).

Transmembrane regions (helical) follow at residues 17–37 (ILLL…LAGL), 59–79 (LLLW…GLEV), 95–115 (SLPT…YLLF), 124–144 (AGWA…MALL), 154–174 (VFLL…IALF), 177–197 (TDLS…LVAL), 213–233 (LVLW…GVII), 261–281 (FLIL…NMSL), 287–307 (PVPV…VMLF), 328–348 (IAPV…IASL), and 363–383 (LGTL…LSKV).

This sequence belongs to the NhaA Na(+)/H(+) (TC 2.A.33) antiporter family.

Its subcellular location is the cell inner membrane. It catalyses the reaction Na(+)(in) + 2 H(+)(out) = Na(+)(out) + 2 H(+)(in). In terms of biological role, na(+)/H(+) antiporter that extrudes sodium in exchange for external protons. The sequence is that of Na(+)/H(+) antiporter NhaA from Shewanella sp. (strain MR-4).